We begin with the raw amino-acid sequence, 240 residues long: 7-cyano-7-deazaguanine synthase (240 aa).

14–24 (FSGGQDSATCL) is a binding site for ATP. Residues C202, C217, C220, and C223 each contribute to the Zn(2+) site.

The protein belongs to the QueC family. The cofactor is Zn(2+).

The enzyme catalyses 7-carboxy-7-deazaguanine + NH4(+) + ATP = 7-cyano-7-deazaguanine + ADP + phosphate + H2O + H(+). The protein operates within purine metabolism; 7-cyano-7-deazaguanine biosynthesis. Catalyzes the ATP-dependent conversion of 7-carboxy-7-deazaguanine (CDG) to 7-cyano-7-deazaguanine (preQ(0)). The polypeptide is 7-cyano-7-deazaguanine synthase (Rhodopseudomonas palustris (strain BisB18)).